Here is a 412-residue protein sequence, read N- to C-terminus: Type II methyltransferase M.Sau3AI (412 aa).

An SAM-dependent MTase C5-type domain is found at 4–402 (IKVVELFAGV…NQIEKIDSIT (399 aa)). C85 is a catalytic residue.

It belongs to the class I-like SAM-binding methyltransferase superfamily. C5-methyltransferase family.

The catalysed reaction is a 2'-deoxycytidine in DNA + S-adenosyl-L-methionine = a 5-methyl-2'-deoxycytidine in DNA + S-adenosyl-L-homocysteine + H(+). Functionally, a methylase that recognizes the double-stranded sequence 5'-GATC-3', methylates C-4 on both strands and protects the DNA from cleavage by the Sau3AI endonuclease. This chain is Type II methyltransferase M.Sau3AI (sau3AIM), found in Staphylococcus aureus.